We begin with the raw amino-acid sequence, 312 residues long: Ornithine carbamoyltransferase (312 aa).

Residues 57 to 60 (STRT), Q84, R108, and 135 to 138 (HPCQ) each bind carbamoyl phosphate. L-ornithine is bound by residues N166, D226, and 230 to 231 (SM). Residues 265–266 (CL) and R293 contribute to the carbamoyl phosphate site.

Belongs to the aspartate/ornithine carbamoyltransferase superfamily. OTCase family.

It localises to the cytoplasm. It carries out the reaction carbamoyl phosphate + L-ornithine = L-citrulline + phosphate + H(+). Its pathway is amino-acid biosynthesis; L-arginine biosynthesis; L-arginine from L-ornithine and carbamoyl phosphate: step 1/3. Its function is as follows. Reversibly catalyzes the transfer of the carbamoyl group from carbamoyl phosphate (CP) to the N(epsilon) atom of ornithine (ORN) to produce L-citrulline. The chain is Ornithine carbamoyltransferase from Brucella suis biovar 1 (strain 1330).